A 185-amino-acid polypeptide reads, in one-letter code: Ribosome-recycling factor (185 aa).

It belongs to the RRF family.

Its subcellular location is the cytoplasm. Its function is as follows. Responsible for the release of ribosomes from messenger RNA at the termination of protein biosynthesis. May increase the efficiency of translation by recycling ribosomes from one round of translation to another. The chain is Ribosome-recycling factor from Laribacter hongkongensis (strain HLHK9).